Consider the following 301-residue polypeptide: Cytidine deaminase 1 (301 aa).

2 consecutive CMP/dCMP-type deaminase domains span residues S23–D156 and D188–A301. Substrate is bound at residue N64 to E66. Zn(2+) is bound at residue H77. E79 functions as the Proton donor in the catalytic mechanism. Residues C104 and C107 each coordinate Zn(2+).

This sequence belongs to the cytidine and deoxycytidylate deaminase family. As to quaternary structure, homodimer. Zn(2+) is required as a cofactor. Expressed in roots, rosette leaves, stems and flowers.

The enzyme catalyses cytidine + H2O + H(+) = uridine + NH4(+). It catalyses the reaction 2'-deoxycytidine + H2O + H(+) = 2'-deoxyuridine + NH4(+). Its activity is regulated as follows. Inhibited by uridine, CMP and dCMP. In terms of biological role, this enzyme scavenges exogenous and endogenous cytidine and 2'-deoxycytidine for UMP synthesis. Functions as a conventional cytidine deaminase. Has no affinity for RNA and is not involved in RNA-editing by C-to-U deamination. The polypeptide is Cytidine deaminase 1 (CDA1) (Arabidopsis thaliana (Mouse-ear cress)).